Consider the following 152-residue polypeptide: MEALFQAGSILMKVNTLQGKKMVESGLQSGDLSLSQSWPSYLPLPADLEILQQKVAGVQRELEDFKEEALKAIRYLEDAFCQMSGVLAQQEEQAARVKQRLREEEDRGIVRNKVLTFLLPREKQLREHCQRLENMLVRSHNPLRAIRKSQAD.

Residues 46–109 (ADLEILQQKV…RLREEEDRGI (64 aa)) adopt a coiled-coil conformation.

The protein is Coiled-coil domain-containing protein 182 (Ccdc182) of Mus musculus (Mouse).